Here is a 246-residue protein sequence, read N- to C-terminus: MNPLITDFQTPQQRTPVIVALDFANEKDTLGFVRNLDPALCQIKIGKELFTATGRSLAESLIHQGFKLFLDLKYHDIPHTVAQACKVAADMGVWMVDMHASGGRRMMEAAAEAVAGYGTKPLLIGVTVLTSMEQSDLAEIGLNTAPEEQVIRLAKLAQSSGLDGVVCSAQEAAPLRRELGRDFVLVTPGIRLDVAGNNDDQRRIMTPAEALAAGSTYLVMGRPVTRAADPVAVLREVNRVANLEAN.

Residues D22, K44, 71 to 80, T130, R191, Q201, G221, and R222 contribute to the substrate site; that span reads DLKYHDIPHT. The active-site Proton donor is K73.

It belongs to the OMP decarboxylase family. Type 1 subfamily. In terms of assembly, homodimer.

It carries out the reaction orotidine 5'-phosphate + H(+) = UMP + CO2. It functions in the pathway pyrimidine metabolism; UMP biosynthesis via de novo pathway; UMP from orotate: step 2/2. In terms of biological role, catalyzes the decarboxylation of orotidine 5'-monophosphate (OMP) to uridine 5'-monophosphate (UMP). This chain is Orotidine 5'-phosphate decarboxylase, found in Neisseria gonorrhoeae (strain ATCC 700825 / FA 1090).